The sequence spans 61 residues: Small ribosomal subunit protein uS14 (61 aa).

Zn(2+) is bound by residues C24, C27, C40, and C43.

The protein belongs to the universal ribosomal protein uS14 family. Zinc-binding uS14 subfamily. In terms of assembly, part of the 30S ribosomal subunit. Contacts proteins S3 and S10. Zn(2+) is required as a cofactor.

Functionally, binds 16S rRNA, required for the assembly of 30S particles and may also be responsible for determining the conformation of the 16S rRNA at the A site. In Borrelia duttonii (strain Ly), this protein is Small ribosomal subunit protein uS14.